Here is a 74-residue protein sequence, read N- to C-terminus: Conotoxin AbVIA (74 aa).

The N-terminal stretch at 1–17 (VLIIAVLFLTACQLTTA) is a signal peptide. A propeptide spanning residues 18–38 (VTSSRGEQKHRALRSTDKKFK) is cleaved from the precursor. 3 disulfides stabilise this stretch: Cys-43–Cys-57, Cys-50–Cys-61, and Cys-56–Cys-68. A Serine amide modification is found at Ser-73.

Belongs to the conotoxin O1 superfamily. In terms of tissue distribution, expressed by the venom duct.

The protein localises to the secreted. The sequence is that of Conotoxin AbVIA from Conus abbreviatus (Abbreviated cone).